We begin with the raw amino-acid sequence, 477 residues long: Cysteine--tRNA ligase (477 aa).

A Zn(2+)-binding site is contributed by C28. The short motif at 30 to 40 is the 'HIGH' region element; that stretch reads PTVYDYAHIGN. Zn(2+) is bound by residues C213, H238, and E242. A 'KMSKS' region motif is present at residues 270–274; sequence KMSKS. K273 lines the ATP pocket.

This sequence belongs to the class-I aminoacyl-tRNA synthetase family. As to quaternary structure, monomer. Requires Zn(2+) as cofactor.

The protein resides in the cytoplasm. The enzyme catalyses tRNA(Cys) + L-cysteine + ATP = L-cysteinyl-tRNA(Cys) + AMP + diphosphate. The polypeptide is Cysteine--tRNA ligase (cysS) (Chlamydia trachomatis serovar D (strain ATCC VR-885 / DSM 19411 / UW-3/Cx)).